We begin with the raw amino-acid sequence, 155 residues long: Putative pre-16S rRNA nuclease (155 aa).

The protein belongs to the YqgF nuclease family.

It localises to the cytoplasm. In terms of biological role, could be a nuclease involved in processing of the 5'-end of pre-16S rRNA. The polypeptide is Putative pre-16S rRNA nuclease (Wolbachia sp. subsp. Drosophila simulans (strain wRi)).